Reading from the N-terminus, the 2631-residue chain is Cyclic GMP-binding protein C (2631 aa).

6 LRR repeats span residues 170-194 (TAQI…IFSL), 196-217 (WIQK…IGKL), 218-240 (QQLQ…IGDL), 242-262 (NLKR…LERL), 263-285 (SKLE…IASL), and 287-308 (SLKT…VVSK). The region spanning 323-515 (GARPCLRSKL…QLIEDIIKTQ (193 aa)) is the Roc domain. GTP-binding positions include 336 to 343 (GDPGVGKT), 402 to 406 (DIANQ), and 458 to 461 (THID). The COR domain maps to 523–741 (PSSFFTLEEA…ESCQKRAVIL (219 aa)). One can recognise a Protein kinase domain in the interval 878 to 1172 (VKINKEVGRG…KKKFAPLPFT (295 aa)). ATP contacts are provided by residues 884–892 (VGRGAFGIV) and K905. D1023 (proton acceptor) is an active-site residue. Over residues 1225–1250 (ISLTSSGTSPTNSPVGGLLSQSLTQP) the composition is skewed to polar residues. 2 disordered regions span residues 1225 to 1263 (ISLT…ILST) and 1387 to 1418 (SSAT…RNSV). The span at 1251–1263 (ITSGGSTSGILST) shows a compositional bias: low complexity. The N-terminal Ras-GEF domain occupies 1366–1539 (SVSIIIAATM…QIYGTLTTHE (174 aa)). Residues 1392–1404 (KSEHISTRRRSDT) are compositionally biased toward basic and acidic residues. In terms of domain architecture, DEP spans 1620–1706 (PLLGITVKEK…SPTSFYMFLE (87 aa)). Residues 1708–1971 (DPELIARQYT…DLKALDSLQI (264 aa)) form the Ras-GEF domain. The interval 1989 to 2013 (GTTNDDKEKGDENGGGLTSSNFFGN) is disordered. 2014–2133 (GSDELTERDW…AKFYKIMANQ (120 aa)) provides a ligand contact to a nucleoside 3',5'-cyclic phosphate. 3 disordered regions span residues 2142–2180 (PWSK…GGGL), 2192–2239 (MSLS…TTTD), and 2263–2346 (SANL…GQQP). The segment covering 2144 to 2174 (SKPKNTTGGSSSSNQSAGPDNILGTTPTGIS) has biased composition (low complexity). Positions 2212–2221 (LPSPPAPLQS) are enriched in pro residues. Over residues 2222–2238 (PPTSGISSPTTTTSTTT) the composition is skewed to low complexity. Basic and acidic residues predominate over residues 2287-2299 (TINKDPHQRDSGS). Positions 2321-2336 (GSISYLGRTQTSTSPL) are enriched in polar residues. The GRAM domain maps to 2354-2414 (EFCQRFALVD…KNIDKLICIN (61 aa)). 2490 to 2616 (GDELTKEDWE…ASKWFKYLAT (127 aa)) provides a ligand contact to a nucleoside 3',5'-cyclic phosphate.

Belongs to the protein kinase superfamily. TKL Ser/Thr protein kinase family. ROCO subfamily.

It catalyses the reaction L-seryl-[protein] + ATP = O-phospho-L-seryl-[protein] + ADP + H(+). The catalysed reaction is L-threonyl-[protein] + ATP = O-phospho-L-threonyl-[protein] + ADP + H(+). In terms of biological role, promotes the exchange of Ras-bound GDP by GTP. Required for cyclic GMP-mediated chemotaxis, polarity. Plays a key role in cyclic AMP-induced myosin II translocation to the cortex. Also involved in the phosphorylation of mlkA and mlcR, either directly or via an intermediate kinase. In Dictyostelium discoideum (Social amoeba), this protein is Cyclic GMP-binding protein C (gbpC).